Consider the following 41-residue polypeptide: Replication-associated protein (41 aa).

Its function is as follows. Involved in viral RNA replication. This Potato leafroll virus (strain Potato/Scotland/strain 1/1984) (PLrV) protein is Replication-associated protein.